Here is a 279-residue protein sequence, read N- to C-terminus: Large ribosomal subunit protein uL2 (279 aa).

Disordered stretches follow at residues 32–53 (SLLRPLPKHGGRNNAGRITTRH) and 225–279 (AMNP…KKRK). The span at 253–268 (KEGRTRHINKPSDKLI) shows a compositional bias: basic and acidic residues. Residues 269–279 (VRRRNAGKKRK) are compositionally biased toward basic residues.

The protein belongs to the universal ribosomal protein uL2 family. In terms of assembly, part of the 50S ribosomal subunit. Forms a bridge to the 30S subunit in the 70S ribosome.

In terms of biological role, one of the primary rRNA binding proteins. Required for association of the 30S and 50S subunits to form the 70S ribosome, for tRNA binding and peptide bond formation. It has been suggested to have peptidyltransferase activity; this is somewhat controversial. Makes several contacts with the 16S rRNA in the 70S ribosome. The protein is Large ribosomal subunit protein uL2 of Clavibacter michiganensis subsp. michiganensis (strain NCPPB 382).